Reading from the N-terminus, the 238-residue chain is Demethylmenaquinone methyltransferase (238 aa).

S-adenosyl-L-methionine contacts are provided by residues threonine 65, aspartate 85, and 109–110 (DA).

Belongs to the class I-like SAM-binding methyltransferase superfamily. MenG/UbiE family.

It catalyses the reaction a 2-demethylmenaquinol + S-adenosyl-L-methionine = a menaquinol + S-adenosyl-L-homocysteine + H(+). It participates in quinol/quinone metabolism; menaquinone biosynthesis; menaquinol from 1,4-dihydroxy-2-naphthoate: step 2/2. Functionally, methyltransferase required for the conversion of demethylmenaquinol (DMKH2) to menaquinol (MKH2). The polypeptide is Demethylmenaquinone methyltransferase (Roseiflexus castenholzii (strain DSM 13941 / HLO8)).